We begin with the raw amino-acid sequence, 74 residues long: MFFLGFLSVTMDYWSTKVKIYSYTLLTLLVITLICYLIHIFCKLRMKKNSVTNNMPPPPPPYTVSSRCSQYYID.

A helical transmembrane segment spans residues 20–40; sequence IYSYTLLTLLVITLICYLIHI.

Belongs to the asfivirus KP93L family.

It is found in the host membrane. This is an uncharacterized protein from African swine fever virus (isolate Tick/South Africa/Pretoriuskop Pr4/1996) (ASFV).